The chain runs to 216 residues: Probable GTP-binding protein EngB (216 aa).

The EngB-type G domain maps to 24–205; it reads QTPELAFVGR…WARIASAATD (182 aa). GTP-binding positions include 32-39, 59-63, 86-89, 153-156, and 184-186; these read GRSNVGKS, GRTRA, DLPG, TKMD, and FSA. Ser-39 and Thr-61 together coordinate Mg(2+).

This sequence belongs to the TRAFAC class TrmE-Era-EngA-EngB-Septin-like GTPase superfamily. EngB GTPase family. It depends on Mg(2+) as a cofactor.

Its function is as follows. Necessary for normal cell division and for the maintenance of normal septation. In Anaeromyxobacter sp. (strain Fw109-5), this protein is Probable GTP-binding protein EngB.